Reading from the N-terminus, the 241-residue chain is Oil body-associated protein 1B (241 aa).

Residues 1 to 12 are compositionally biased toward polar residues; the sequence is MEKAVHSSTTSG. Residues 1–22 form a disordered region; sequence MEKAVHSSTTSGPAVPGETTKT.

The protein belongs to the OBAP family.

The protein is Oil body-associated protein 1B of Arabidopsis thaliana (Mouse-ear cress).